The primary structure comprises 131 residues: Large ribosomal subunit protein bL17 (131 aa).

Belongs to the bacterial ribosomal protein bL17 family. Part of the 50S ribosomal subunit. Contacts protein L32.

The protein is Large ribosomal subunit protein bL17 of Cupriavidus pinatubonensis (strain JMP 134 / LMG 1197) (Cupriavidus necator (strain JMP 134)).